Reading from the N-terminus, the 580-residue chain is Phosphomethylpyrimidine synthase (580 aa).

The segment at M1–L58 is disordered. Substrate contacts are provided by residues N180, M209, Y238, H274, S294 to G296, D335 to R338, and E374. Residue H378 coordinates Zn(2+). Y401 lines the substrate pocket. H442 provides a ligand contact to Zn(2+). [4Fe-4S] cluster is bound by residues C522, C525, and C530. The tract at residues V554 to E580 is disordered.

The protein belongs to the ThiC family. Requires [4Fe-4S] cluster as cofactor.

It carries out the reaction 5-amino-1-(5-phospho-beta-D-ribosyl)imidazole + S-adenosyl-L-methionine = 4-amino-2-methyl-5-(phosphooxymethyl)pyrimidine + CO + 5'-deoxyadenosine + formate + L-methionine + 3 H(+). The protein operates within cofactor biosynthesis; thiamine diphosphate biosynthesis. Functionally, catalyzes the synthesis of the hydroxymethylpyrimidine phosphate (HMP-P) moiety of thiamine from aminoimidazole ribotide (AIR) in a radical S-adenosyl-L-methionine (SAM)-dependent reaction. The polypeptide is Phosphomethylpyrimidine synthase (Corynebacterium efficiens (strain DSM 44549 / YS-314 / AJ 12310 / JCM 11189 / NBRC 100395)).